Reading from the N-terminus, the 409-residue chain is LL-diaminopimelate aminotransferase (409 aa).

2 residues coordinate substrate: Tyr-15 and Gly-42. Pyridoxal 5'-phosphate is bound by residues Tyr-72, 108 to 109 (AK), Tyr-132, Asn-186, Tyr-217, and 245 to 247 (SFS). Substrate is bound by residues Lys-109, Tyr-132, and Asn-186. Lys-248 is subject to N6-(pyridoxal phosphate)lysine. 2 residues coordinate pyridoxal 5'-phosphate: Arg-256 and Asn-291. Positions 291 and 386 each coordinate substrate.

This sequence belongs to the class-I pyridoxal-phosphate-dependent aminotransferase family. LL-diaminopimelate aminotransferase subfamily. As to quaternary structure, homodimer. Requires pyridoxal 5'-phosphate as cofactor.

The enzyme catalyses (2S,6S)-2,6-diaminopimelate + 2-oxoglutarate = (S)-2,3,4,5-tetrahydrodipicolinate + L-glutamate + H2O + H(+). It participates in amino-acid biosynthesis; L-lysine biosynthesis via DAP pathway; LL-2,6-diaminopimelate from (S)-tetrahydrodipicolinate (aminotransferase route): step 1/1. Functionally, involved in the synthesis of meso-diaminopimelate (m-DAP or DL-DAP), required for both lysine and peptidoglycan biosynthesis. Catalyzes the direct conversion of tetrahydrodipicolinate to LL-diaminopimelate. In Desulforapulum autotrophicum (strain ATCC 43914 / DSM 3382 / VKM B-1955 / HRM2) (Desulfobacterium autotrophicum), this protein is LL-diaminopimelate aminotransferase.